Here is a 200-residue protein sequence, read N- to C-terminus: NADH-quinone oxidoreductase subunit C (200 aa).

It belongs to the complex I 30 kDa subunit family. NDH-1 is composed of 14 different subunits. Subunits NuoB, C, D, E, F, and G constitute the peripheral sector of the complex.

It localises to the cell inner membrane. The enzyme catalyses a quinone + NADH + 5 H(+)(in) = a quinol + NAD(+) + 4 H(+)(out). Its function is as follows. NDH-1 shuttles electrons from NADH, via FMN and iron-sulfur (Fe-S) centers, to quinones in the respiratory chain. The immediate electron acceptor for the enzyme in this species is believed to be ubiquinone. Couples the redox reaction to proton translocation (for every two electrons transferred, four hydrogen ions are translocated across the cytoplasmic membrane), and thus conserves the redox energy in a proton gradient. The chain is NADH-quinone oxidoreductase subunit C from Burkholderia ambifaria (strain MC40-6).